We begin with the raw amino-acid sequence, 1285 residues long: Tat-binding homolog 7 (1285 aa).

Disordered regions lie at residues methionine 1–arginine 95, methionine 121–arginine 173, glycine 224–glutamine 243, and glutamine 258–arginine 359. Acidic residues-rich tracts occupy residues glutamate 226 to glutamate 237 and glutamine 258 to glutamate 270. The span at asparagine 311 to arginine 325 shows a compositional bias: basic residues. ATP is bound at residue glycine 446–threonine 453. The Bromo domain occupies alanine 928 to methionine 1032. Positions glutamate 1100–glutamate 1196 are disordered. The segment covering lysine 1136–lysine 1149 has biased composition (basic residues). Residues proline 1155–aspartate 1175 are compositionally biased toward acidic residues.

It belongs to the AAA ATPase family.

In terms of biological role, thought to form a complex that enhances transcription from repetitive DNA sequences by modulating chromatin structure. The chain is Tat-binding homolog 7 from Caenorhabditis briggsae.